We begin with the raw amino-acid sequence, 369 residues long: 4-hydroxy-3-methylbut-2-en-1-yl diphosphate synthase (flavodoxin) (369 aa).

Cysteine 270, cysteine 273, cysteine 305, and glutamate 312 together coordinate [4Fe-4S] cluster.

The protein belongs to the IspG family. It depends on [4Fe-4S] cluster as a cofactor.

The enzyme catalyses (2E)-4-hydroxy-3-methylbut-2-enyl diphosphate + oxidized [flavodoxin] + H2O + 2 H(+) = 2-C-methyl-D-erythritol 2,4-cyclic diphosphate + reduced [flavodoxin]. The protein operates within isoprenoid biosynthesis; isopentenyl diphosphate biosynthesis via DXP pathway; isopentenyl diphosphate from 1-deoxy-D-xylulose 5-phosphate: step 5/6. Its function is as follows. Converts 2C-methyl-D-erythritol 2,4-cyclodiphosphate (ME-2,4cPP) into 1-hydroxy-2-methyl-2-(E)-butenyl 4-diphosphate. This Pseudomonas savastanoi pv. phaseolicola (strain 1448A / Race 6) (Pseudomonas syringae pv. phaseolicola (strain 1448A / Race 6)) protein is 4-hydroxy-3-methylbut-2-en-1-yl diphosphate synthase (flavodoxin).